Consider the following 782-residue polypeptide: MLAEPVPDALEQEHPGAVKLEEDEVGEEDPRLAESRPRPEVAHQLFRCFQYQEDMGPRASLGRLRELCNHWLRPALHTKKQILELLVLEQFLSVLPPHVLSRLHGQPLRDGEEVVQLLEGVPRDISHMGPLDFSFSAGKNAPADIISEEQNSPSQVPSHSPQTELPSEEIPALHPLNELPPPQPAPIRPAEPEEWRLAPSSNWPMSPEPQEILQDPRESNPSQGPSWLEENSRDQELAAVLESLTFEDTSEKRAWPANPLGFGSRMPDNEELKVEEPKVTTWPVVIGAESQTEKPEVAGEPLTQTVGQETSSTGWGGTPADGSEVVKVRGASDAPEPQGEMQFICTYCGVNFPEMSHLQAHQLQSHPNLQPHPSSRSFRCLWCGKTFGRSSILKLHMRTHTDERPHACHLCNRRFRQSSHLTKHLLTHSSEPAFRCAECNQGFQRRSSLMQHLLAHAQGKNLTPNPEGKTKVPEMAAVLCSHCGQTFKRRSSLKRHLRNHAKDKDHLSSEDPGSLSSSQESNPYVCSDCGKAFRQSEQLMIHTRRVHTRERPFSCQVCGRCFTQNSQLISHQQIHTGEKPHACPQCSKRFVRRAGLARHLLTHGSLRPYHCAQCGKSFRQMRDLTRHVRCHTGEKPCRCNECGEGFTQNAHLARHQRIHTGEKPHACDICGHRFRNSSNLARHRRSHTGERPYSCPTCGRSFRRNAHLQRHLITHTGSKQEKEVPQECPECGKSFNRSCNLLRHLLVHTGARPYSCALCGRSFSRNSHLLRHLRTHARESLY.

Residues Met-1–Pro-37 are disordered. An SCAN box domain is found at Met-1–Trp-71. Composition is skewed to basic and acidic residues over residues Glu-11–Leu-20 and Glu-28–Pro-37. Phosphoserine is present on residues Ser-160 and Ser-206. 2 disordered regions span residues Leu-197–Arg-233 and Ser-290–Asp-321. C2H2-type zinc fingers lie at residues Thr-292–Trp-315, Asp-321–Phe-343, Gly-349–Pro-371, Ser-377–Thr-399, Leu-421–Phe-443, Glu-467–Arg-489, Arg-495–Ser-517, Pro-523–Arg-545, Arg-551–Gln-573, Lys-579–Leu-601, Arg-607–Arg-629, Lys-635–Arg-657, Ile-669–Arg-691, and Thr-697–Lys-719. Residues Leu-302 to Thr-313 are compositionally biased toward polar residues. Gln-485 carries the N5-methylglutamine modification. The segment at Ser-491–Asn-522 is disordered. Over residues His-500 to Ser-509 the composition is skewed to basic and acidic residues. Low complexity predominate over residues Glu-510–Ser-521.

As to quaternary structure, interacts with POU5F1/OCT4 and SOX2. In terms of processing, methylated at Gln-485 by N6AMT1. Embryonic stem (ES) cell-specific. Not expressed in adult, except in testis.

The protein resides in the nucleus. Its function is as follows. Embryonic stem (ES) cell-specific transcription factor required to maintain ES cell pluripotency. Can both activate and /or repress expression of target genes, depending on the context. Specifically binds the 5'-[GA]CGCNNGCG[CT]-3' DNA consensus sequence. Regulates expression of POU5F1/OCT4, ZSCAN4 and ALYREF/THOC4. The protein is Zinc finger and SCAN domain-containing protein 10 (Zscan10) of Mus musculus (Mouse).